We begin with the raw amino-acid sequence, 493 residues long: Glutamyl-tRNA(Gln) amidotransferase subunit A (493 aa).

Residues lysine 79 and serine 159 each act as charge relay system in the active site. Catalysis depends on serine 183, which acts as the Acyl-ester intermediate.

It belongs to the amidase family. GatA subfamily. As to quaternary structure, heterotrimer of A, B and C subunits.

The catalysed reaction is L-glutamyl-tRNA(Gln) + L-glutamine + ATP + H2O = L-glutaminyl-tRNA(Gln) + L-glutamate + ADP + phosphate + H(+). Functionally, allows the formation of correctly charged Gln-tRNA(Gln) through the transamidation of misacylated Glu-tRNA(Gln) in organisms which lack glutaminyl-tRNA synthetase. The reaction takes place in the presence of glutamine and ATP through an activated gamma-phospho-Glu-tRNA(Gln). The chain is Glutamyl-tRNA(Gln) amidotransferase subunit A from Brucella suis (strain ATCC 23445 / NCTC 10510).